Consider the following 535-residue polypeptide: Berberine bridge enzyme-like 3 (535 aa).

The N-terminal stretch at 1–19 (MKEALFGLYLVLLVSGLEA) is a signal peptide. Cys32 and Cys95 are disulfide-bonded. Asn52 is a glycosylation site (N-linked (GlcNAc...) asparagine). The FAD-binding PCMH-type domain occupies 73–247 (NNKNLLAIVV…LSWKINLVEV (175 aa)). Residues 110 to 172 (HDNEGLSYVS…QTLAFPAGIC (63 aa)) constitute a cross-link (6-(S-cysteinyl)-8alpha-(pros-histidyl)-FAD (His-Cys)). N-linked (GlcNAc...) asparagine glycans are attached at residues Asn214, Asn257, Asn292, Asn321, Asn341, Asn415, Asn439, and Asn444.

It belongs to the oxygen-dependent FAD-linked oxidoreductase family. It depends on FAD as a cofactor. The FAD cofactor is bound via a bicovalent 6-S-cysteinyl, 8alpha-N1-histidyl FAD linkage.

Its subcellular location is the endoplasmic reticulum. The protein resides in the cell membrane. The protein localises to the secreted. It localises to the cell wall. In terms of biological role, flavin-dependent oxidoreductase involved in the biosynthetic pathway to 4-hydroxyindole-3-carbonyl nitrile (4-OH-ICN), a cyanogenic metabolite required for inducible pathogen defense. Converts indole cyanohydrin into indole-3-carbonyl nitrile (ICN). The sequence is that of Berberine bridge enzyme-like 3 from Arabidopsis thaliana (Mouse-ear cress).